A 470-amino-acid chain; its full sequence is Serine/threonine-protein kinase PEPKR2 (470 aa).

The Protein kinase domain occupies 107–355 (YVFGRNIGKG…ADEVLRHPWI (249 aa)). ATP-binding positions include 113–121 (IGKGKFGSV) and lysine 136. Aspartate 224 acts as the Proton acceptor in catalysis. Residues 377–386 (GSSTCLQNRS) are compositionally biased toward polar residues. Disordered regions lie at residues 377-419 (GSST…EEED) and 441-464 (RSRVCSPTNNPIEQQHSSNLTSTS). The span at 387–403 (PTEKTDLNRADREKKIP) shows a compositional bias: basic and acidic residues. Residues 445–464 (CSPTNNPIEQQHSSNLTSTS) show a composition bias toward polar residues.

It belongs to the protein kinase superfamily. Ser/Thr protein kinase family.

It carries out the reaction L-seryl-[protein] + ATP = O-phospho-L-seryl-[protein] + ADP + H(+). The enzyme catalyses L-threonyl-[protein] + ATP = O-phospho-L-threonyl-[protein] + ADP + H(+). The chain is Serine/threonine-protein kinase PEPKR2 (PEPKR2) from Arabidopsis thaliana (Mouse-ear cress).